A 528-amino-acid chain; its full sequence is MEIPSLNKQQEFTLASVTDLTSPSSSLSSSPVVATFSCVNEVKELRFQESKSSDGFSFDLSSTQLFKLGPLQFTCVSDGSISSAKEKSSFSRGVVIKFRDEKDSKEFCDSFEECKKDDAVKQGSALPNGTVVSANKSKFDDKIEAASAKMYFHYYGQLLHQQNMLQDYVRTGTYHAAVMENRSDFSGRVVVDVGAGSGILSMFAALAGAKHVYAVEASEMAEYARKLIAGNPLLAERITVIKGKIEDIELPEKADVLISEPMGTLLVNERMLETYVIARDRFLSPNGKMFPTVGRIHMAPFADEFLFVEMANKALFWQQQNYYGVDLTPLYVSAHQGYFSQPVVDAFDPRLLVAPSMFHVIDFTMMTEEQFYEIDIPLKFTASVCTRIHGLACWFDVLFDGSTVQRWFTTAPGAPTTHWYQIRCVLSQPIHVMAGQEITGRLHLIAHSAQSYTINLTLSAKMWGPGANQGGILQTSSCKLDLKEPYYRMSQPQVYPTQEPPAQSQDIHIHSDDLEELELLQQNANAQL.

Position 1 is an N-acetylmethionine (Met-1). Residues 144–459 (EAASAKMYFH…QSYTINLTLS (316 aa)) enclose the SAM-dependent MTase PRMT-type domain. Residues Gln-161, Arg-170, Gly-194, Glu-216, and Glu-246 each contribute to the S-adenosyl-L-methionine site. Active-site residues include Glu-260 and Glu-269. Thr-274 contributes to the S-adenosyl-L-methionine binding site.

This sequence belongs to the class I-like SAM-binding methyltransferase superfamily. Protein arginine N-methyltransferase family.

It is found in the nucleus. The protein resides in the cytoplasm. The catalysed reaction is L-arginyl-[protein] + 2 S-adenosyl-L-methionine = N(omega),N(omega)-dimethyl-L-arginyl-[protein] + 2 S-adenosyl-L-homocysteine + 2 H(+). Its function is as follows. Methylates (mono- and asymmetric dimethylation) the guanidino nitrogens of arginyl residues in several proteins involved in DNA packaging, transcription regulation, and mRNA stability. Recruited to promoters upon gene activation, methylates histone H3 and activates transcription via chromatin remodeling. The protein is Probable histone-arginine methyltransferase 1.4 (PRMT14) of Arabidopsis thaliana (Mouse-ear cress).